The primary structure comprises 392 residues: Formate-dependent phosphoribosylglycinamide formyltransferase (392 aa).

N(1)-(5-phospho-beta-D-ribosyl)glycinamide is bound by residues 22–23 and glutamate 82; that span reads EL. Residues arginine 114, lysine 155, 160–165, 195–198, and glutamate 203 each bind ATP; these read SSGKGQ and EGVV. The ATP-grasp domain maps to 119-308; that stretch reads RLAAEELGLP…EFALHVRAFL (190 aa). Glutamate 267 and glutamate 279 together coordinate Mg(2+). N(1)-(5-phospho-beta-D-ribosyl)glycinamide is bound by residues aspartate 286, lysine 355, and 362–363; that span reads RR.

Belongs to the PurK/PurT family. In terms of assembly, homodimer.

It carries out the reaction N(1)-(5-phospho-beta-D-ribosyl)glycinamide + formate + ATP = N(2)-formyl-N(1)-(5-phospho-beta-D-ribosyl)glycinamide + ADP + phosphate + H(+). The protein operates within purine metabolism; IMP biosynthesis via de novo pathway; N(2)-formyl-N(1)-(5-phospho-D-ribosyl)glycinamide from N(1)-(5-phospho-D-ribosyl)glycinamide (formate route): step 1/1. Involved in the de novo purine biosynthesis. Catalyzes the transfer of formate to 5-phospho-ribosyl-glycinamide (GAR), producing 5-phospho-ribosyl-N-formylglycinamide (FGAR). Formate is provided by PurU via hydrolysis of 10-formyl-tetrahydrofolate. This is Formate-dependent phosphoribosylglycinamide formyltransferase from Salmonella arizonae (strain ATCC BAA-731 / CDC346-86 / RSK2980).